The following is an 85-amino-acid chain: Large ribosomal subunit protein bL27 (85 aa).

Positions 1–23 are disordered; it reads MAHKKAGGSTRNGRDSESKRLGV.

The protein belongs to the bacterial ribosomal protein bL27 family.

The sequence is that of Large ribosomal subunit protein bL27 from Thioalkalivibrio sulfidiphilus (strain HL-EbGR7).